Consider the following 246-residue polypeptide: Acetoacetate decarboxylase (246 aa).

The Schiff-base intermediate with acetoacetate role is filled by lysine 116.

This sequence belongs to the ADC family. Homododecamer.

It carries out the reaction acetoacetate + H(+) = acetone + CO2. Its function is as follows. Catalyzes the conversion of acetoacetate to acetone and carbon dioxide. This is Acetoacetate decarboxylase from Chromobacterium violaceum (strain ATCC 12472 / DSM 30191 / JCM 1249 / CCUG 213 / NBRC 12614 / NCIMB 9131 / NCTC 9757 / MK).